The chain runs to 147 residues: Siroheme decarboxylase NirG subunit (147 aa).

The protein belongs to the Ahb/Nir family. In terms of assembly, probably forms a complex composed of NirD, NirL, NirG and NirH. All proteins are required for the total conversion of siroheme to didecarboxysiroheme.

The enzyme catalyses siroheme + 2 H(+) = 12,18-didecarboxysiroheme + 2 CO2. It functions in the pathway porphyrin-containing compound metabolism. Functionally, involved in heme d1 biosynthesis. Catalyzes the decarboxylation of siroheme into didecarboxysiroheme. The protein is Siroheme decarboxylase NirG subunit of Stutzerimonas stutzeri (Pseudomonas stutzeri).